A 471-amino-acid chain; its full sequence is 4-aminobutyrate aminotransferase (471 aa).

135–136 (GA) provides a ligand contact to pyridoxal 5'-phosphate. Arg192 serves as a coordination point for substrate. The residue at position 326 (Lys326) is an N6-(pyridoxal phosphate)lysine. Residue Thr351 participates in pyridoxal 5'-phosphate binding.

The protein belongs to the class-III pyridoxal-phosphate-dependent aminotransferase family. Homodimer and homotetramer. Pyridoxal 5'-phosphate is required as a cofactor.

Its subcellular location is the cytoplasm. It carries out the reaction 4-aminobutanoate + 2-oxoglutarate = succinate semialdehyde + L-glutamate. Its function is as follows. Required for the degradation of gamma-aminobutyric acid (GABA), which is important for utilization of GABA as nitrogen source and for oxidative stress tolerance. Deaminates GABA to succinate semialdehyde, which in turn is converted to succinate by the succinate-semialdehyde dehydrogenase UGA2. Cannot transaminate beta-alanine (BAL). The protein is 4-aminobutyrate aminotransferase (UGA1) of Saccharomyces cerevisiae (strain ATCC 204508 / S288c) (Baker's yeast).